An 873-amino-acid chain; its full sequence is Probable beta-glucosidase A (873 aa).

The N-terminal stretch at 1-19 (MRFGWLEVAALTAASVANA) is a signal peptide. Asparagine 71, asparagine 222, and asparagine 263 each carry an N-linked (GlcNAc...) asparagine glycan. Aspartate 291 is a catalytic residue. 9 N-linked (GlcNAc...) asparagine glycosylation sites follow: asparagine 326, asparagine 333, asparagine 365, asparagine 453, asparagine 534, asparagine 553, asparagine 575, asparagine 679, and asparagine 725. Residues 731-764 (DSSDDPNYGWQDSEYIPEGARDGSPQPLLKAGGA) form a disordered region.

Belongs to the glycosyl hydrolase 3 family.

It localises to the secreted. The catalysed reaction is Hydrolysis of terminal, non-reducing beta-D-glucosyl residues with release of beta-D-glucose.. It participates in glycan metabolism; cellulose degradation. Functionally, beta-glucosidases are one of a number of cellulolytic enzymes involved in the degradation of cellulosic biomass. Catalyzes the last step releasing glucose from the inhibitory cellobiose. In Aspergillus fumigatus (strain ATCC MYA-4609 / CBS 101355 / FGSC A1100 / Af293) (Neosartorya fumigata), this protein is Probable beta-glucosidase A (bglA).